We begin with the raw amino-acid sequence, 78 residues long: U7-lycotoxin-Ls1f (78 aa).

The N-terminal stretch at 1–22 is a signal peptide; the sequence is MKLIIFTGLALLLIVSLIDVEA. Residues 23-26 constitute a propeptide that is removed on maturation; sequence QNEG.

It belongs to the neurotoxin 19 (CSTX) family. 07 (U7-Lctx) subfamily. Contains 4 disulfide bonds. In terms of tissue distribution, expressed by the venom gland.

Its subcellular location is the secreted. This chain is U7-lycotoxin-Ls1f, found in Lycosa singoriensis (Wolf spider).